The sequence spans 992 residues: Epstein-Barr nuclear antigen 6 (992 aa).

The segment at 1–70 (MESFEGQGDS…SRGDENRGWM (70 aa)) is disordered. The span at 12 to 31 (QSPDNERGDNVQTTGEHDQD) shows a compositional bias: basic and acidic residues. An interaction with host PIM1 region spans residues 130 to 159 (LILDSGLDTQHILCFVMAARQRLQDIRRGP). 3 disordered regions span residues 355–905 (ATGG…DSMA), 931–954 (PLDINATTPKRPRVEESSHGPARC), and 967–992 (DNSEISVFPKDAKQTDYDASTESELD). Residues 381–391 (VELESSDDELP) are compositionally biased toward acidic residues. Residues 445–461 (AQSTPERPGPSEQSSVT) are compositionally biased toward polar residues. Residues 479–495 (QPPPVPKPVPVKPTPPP) are compositionally biased toward pro residues. Acidic residues predominate over residues 506–520 (YDDDVIEVIDVETTE). The 1-1; approximate repeat unit spans residues 551-555 (PPTVS). The 12 X 5 AA approximate tandem repeats of P-P-A-A-G stretch occupies residues 551 to 610 (PPTVSPSDTGPPAVGPPAAGPPAAGPPAAGPPAAGPPAAGPPAAGPRILAPLSAGPPAAG). One copy of the 2-1; approximate repeat lies at 556 to 560 (PSDTG). A 3-1; approximate repeat occupies 561 to 565 (PPAVG). Over residues 563–594 (AVGPPAAGPPAAGPPAAGPPAAGPPAAGPPAA) the composition is skewed to pro residues. 6 tandem repeats follow at residues 566 to 570 (PPAAG), 571 to 575 (PPAAG), 576 to 580 (PPAAG), 581 to 585 (PPAAG), 586 to 590 (PPAAG), and 591 to 595 (PPAAG). Over residues 595-611 (GPRILAPLSAGPPAAGP) the composition is skewed to low complexity. The stretch at 596-600 (PRILA) is one 10-1; approximate repeat. One copy of the 11-1; approximate repeat lies at 601 to 605 (PLSAG). The stretch at 606–610 (PPAAG) is one 12-1 repeat. Composition is skewed to polar residues over residues 659–676 (TQMQQEPSSHLQSATQPT) and 700–714 (IESSHLSSMSPTQPI). Residues 715-724 (SHEEQPRYED) are compositionally biased toward basic and acidic residues. 2 stretches are compositionally biased toward low complexity: residues 738-764 (AAQPAPQAPYQGYQEPPAPQAPYQGYQ) and 772-781 (PYQGYQEPPA). Tandem repeats lie at residues 741–753 (PAPQAPYQGYQEP), 754–766 (PAPQAPYQGYQEP), and 767–779 (PPPQAPYQGYQEP). Positions 741-779 (PAPQAPYQGYQEPPAPQAPYQGYQEPPPPQAPYQGYQEP) are 3 X 13 AA tandem repeats of P-[AP]-P-Q-A-P-Y-Q-G-Y-Q-E-P. A compositionally biased stretch (polar residues) spans 845-857 (DQVSQFPHLQSET). Residues 859 to 881 (PPRLQLSLVPLVSSSAPSWSSPQ) show a composition bias toward low complexity. Over residues 882-899 (PRAPIRPIPTRFPPPPMP) the composition is skewed to pro residues.

Belongs to the herpesviridae EBNA-6 family. Interacts with host CTPB1; this interaction leads to gene repression, but also seems to interfere with the repressive function of CtBP pre-bound to DNA, leading to EBNA6 mediated up-regulation of many host genes. Interacts with host MYC; this interaction enhances MYC stability. Interacts (via N-terminus) with host RBPJ. Interacts (via N-terminus) with host histone H2AX; this interaction facilitates H2AX proteasomal degradation. Interacts with host TP73; this interaction inhibits TP73-mediated apoptotic pathway. Interacts (via N-terminus) with host PIM1; this interaction upregulates and stabilizes PIM1 and induces cell proliferation by inhibiting the growth suppressive properties of p21.

Its subcellular location is the host nucleus. The protein resides in the host nucleus matrix. Functionally, plays an essential role for the activation and immortalization of human B-cells. Represses transcription of viral promoters TP1 and Cp through interaction with host RBPJ, and inhibits EBNA2-mediated activation of these promoters. Targets host chromatin through interactions with host transcription factors, especially RBPJ and IRF4. Alternatively, EBNA6 also regulates the transcription of the EBV oncogene LMP1 in a cell cycle-dependent manner. Modulates the activity of several host proteins involved in cell cycle regulation including host cyclin A, MYC, RB, p21 and p27 mainly through binding to the host SCF(SKP2) complex. Inhibits the promoter of host H2AX and targets H2AX to proteasomal degradation in order to promote latency and cell proliferation. Upregulates host PIM1 expression and stabilization. Potentiates PIM1 to promote cell proliferation by inhibiting the growth suppressive properties of p21. This is Epstein-Barr nuclear antigen 6 (EBNA6) from Epstein-Barr virus (strain B95-8) (HHV-4).